We begin with the raw amino-acid sequence, 459 residues long: GTPase Der (459 aa).

2 consecutive EngA-type G domains span residues 4 to 169 (PLVA…PEVT) and 179 to 355 (IAVS…AAHR). GTP is bound by residues 10 to 17 (GRPNVGKS), 57 to 61 (DTGGL), 120 to 123 (NKCE), 185 to 192 (GRPNVGKS), 232 to 236 (DTAGI), and 297 to 300 (NKWD). One can recognise a KH-like domain in the interval 356-441 (KRVPTAVVNE…PIRFLWRGKS (86 aa)).

This sequence belongs to the TRAFAC class TrmE-Era-EngA-EngB-Septin-like GTPase superfamily. EngA (Der) GTPase family. As to quaternary structure, associates with the 50S ribosomal subunit.

GTPase that plays an essential role in the late steps of ribosome biogenesis. This is GTPase Der from Synechococcus sp. (strain JA-2-3B'a(2-13)) (Cyanobacteria bacterium Yellowstone B-Prime).